A 241-amino-acid polypeptide reads, in one-letter code: Ribosomal RNA small subunit methyltransferase G (241 aa).

S-adenosyl-L-methionine contacts are provided by residues Gly-79, Phe-84, Ala-130–Glu-131, and Arg-150.

It belongs to the methyltransferase superfamily. RNA methyltransferase RsmG family.

It localises to the cytoplasm. Its function is as follows. Specifically methylates the N7 position of a guanine in 16S rRNA. This is Ribosomal RNA small subunit methyltransferase G from Ligilactobacillus salivarius (strain UCC118) (Lactobacillus salivarius).